A 370-amino-acid polypeptide reads, in one-letter code: 3-dehydroquinate synthase (370 aa).

Residues 107 to 111 (GVIGD), 131 to 132 (TS), lysine 144, and lysine 153 contribute to the NAD(+) site. Residues glutamate 186, histidine 249, and histidine 267 each coordinate Zn(2+).

Belongs to the sugar phosphate cyclases superfamily. Dehydroquinate synthase family. Co(2+) is required as a cofactor. It depends on Zn(2+) as a cofactor. NAD(+) serves as cofactor.

The protein resides in the cytoplasm. It carries out the reaction 7-phospho-2-dehydro-3-deoxy-D-arabino-heptonate = 3-dehydroquinate + phosphate. It functions in the pathway metabolic intermediate biosynthesis; chorismate biosynthesis; chorismate from D-erythrose 4-phosphate and phosphoenolpyruvate: step 2/7. Catalyzes the conversion of 3-deoxy-D-arabino-heptulosonate 7-phosphate (DAHP) to dehydroquinate (DHQ). This Roseobacter denitrificans (strain ATCC 33942 / OCh 114) (Erythrobacter sp. (strain OCh 114)) protein is 3-dehydroquinate synthase.